The sequence spans 156 residues: Small ribosomal subunit protein uS7 (156 aa).

The protein belongs to the universal ribosomal protein uS7 family. As to quaternary structure, part of the 30S ribosomal subunit. Contacts proteins S9 and S11.

In terms of biological role, one of the primary rRNA binding proteins, it binds directly to 16S rRNA where it nucleates assembly of the head domain of the 30S subunit. Is located at the subunit interface close to the decoding center, probably blocks exit of the E-site tRNA. The polypeptide is Small ribosomal subunit protein uS7 (Chromobacterium violaceum (strain ATCC 12472 / DSM 30191 / JCM 1249 / CCUG 213 / NBRC 12614 / NCIMB 9131 / NCTC 9757 / MK)).